The sequence spans 274 residues: Regulator of G-protein signaling rgs-11 (274 aa).

The 120-residue stretch at 137–256 folds into the RGS domain; it reads SPGLLAASKY…LEDPLYLDLL (120 aa).

The protein is Regulator of G-protein signaling rgs-11 (rgs-11) of Caenorhabditis elegans.